The sequence spans 724 residues: WW domain-containing protein ZK1098.1 (724 aa).

WW domains follow at residues 78 to 111 and 123 to 156; these read PSVE…KPDV and QPQQ…KPDG. FF domains lie at 224 to 282, 295 to 349, 353 to 422, 442 to 502, 507 to 562, and 578 to 632; these read KKRQ…WKVQ, IKKS…CIDF, RDKE…HIKQ, QRKV…FVED, YTED…LIEK, and KRRL…YKNG. Residues 626–724 form a disordered region; that stretch reads FNHYKNGTSG…KRKRRESEAD (99 aa). Residues 630 to 639 are compositionally biased toward polar residues; it reads KNGTSGTTAG. Residues 645-657 show a composition bias toward basic residues; sequence KKKKKKDKKKKNK. Positions 681–692 are enriched in basic and acidic residues; it reads SKEDRMDDEERG. The span at 693 to 703 shows a compositional bias: basic residues; that stretch reads KKSKKSRKRSP.

This is WW domain-containing protein ZK1098.1 from Caenorhabditis elegans.